The sequence spans 136 residues: Protein PsiE (136 aa).

4 helical membrane passes run 15–35, 55–75, 82–102, and 108–128; these read ILQT…VVFL, YELV…ALIV, FHFP…RLII, and PLDV…LWLC.

Belongs to the PsiE family.

It is found in the cell inner membrane. In Escherichia coli O17:K52:H18 (strain UMN026 / ExPEC), this protein is Protein PsiE.